The chain runs to 399 residues: MLRWLTAGESHGPALMGIIEGVPAGVEITSGHIADSLARRRLGYGRGARMKFEQDVVTILGGVRHGVTQGGPVAVQVGNTEWPKWEQIMAPDPVDPELLADQARNAPLTRPRPGHADFTGMQKYGFDEARPVLERASARETATRVAMGTVAAQFLKHLGIELVSHTVSIASVSVPDGRPLPEPADVIALDADPLRCFDRETSDAMVAEVDAAHKEGETLGGVVEVLAYGLPPGLGSYVHWDRRLDSRLAAALMGIQAIKGVEVGDGFRTAARRGSAAHDEIVRDEDGRIVRASNRAGGIEGGMSIGDVLRVRAAMKPIATVPRALKTIDVSTGEPAKAHHQRSDVCAVPAAGVVAEAMVALVLAEAVTEKFGGDSVAETARNIKGYLDNIPASLDSIGQ.

NADP(+)-binding residues include arginine 40 and arginine 46. Residues 135 to 137 (RAS), 256 to 257 (QA), glycine 301, 316 to 320 (KPIAT), and arginine 342 contribute to the FMN site.

The protein belongs to the chorismate synthase family. Homotetramer. It depends on FMNH2 as a cofactor.

The enzyme catalyses 5-O-(1-carboxyvinyl)-3-phosphoshikimate = chorismate + phosphate. Its pathway is metabolic intermediate biosynthesis; chorismate biosynthesis; chorismate from D-erythrose 4-phosphate and phosphoenolpyruvate: step 7/7. Functionally, catalyzes the anti-1,4-elimination of the C-3 phosphate and the C-6 proR hydrogen from 5-enolpyruvylshikimate-3-phosphate (EPSP) to yield chorismate, which is the branch point compound that serves as the starting substrate for the three terminal pathways of aromatic amino acid biosynthesis. This reaction introduces a second double bond into the aromatic ring system. The polypeptide is Chorismate synthase (Pseudarthrobacter chlorophenolicus (strain ATCC 700700 / DSM 12829 / CIP 107037 / JCM 12360 / KCTC 9906 / NCIMB 13794 / A6) (Arthrobacter chlorophenolicus)).